We begin with the raw amino-acid sequence, 430 residues long: N-lysine methyltransferase SMYD2-B (430 aa).

An SET domain is found at 5 to 239 (EGLERFDSPG…AGEEVFTSYI (235 aa)). Position 15-17 (15-17 (KGR)) interacts with S-adenosyl-L-methionine. Zn(2+) contacts are provided by C50, C53, C63, C66, C72, C76, H84, and C88. The MYND-type zinc finger occupies 50-88 (CDFCFTRKEGLSKCGKCKQAFYCNVDCQKGDWPMHKLEC). S-adenosyl-L-methionine is bound by residues H135, 204–205 (NH), and 256–258 (YFF).

The protein belongs to the class V-like SAM-binding methyltransferase superfamily.

The protein localises to the cytoplasm. Its subcellular location is the cytosol. The protein resides in the nucleus. It catalyses the reaction L-lysyl(4)-[histone H3] + 3 S-adenosyl-L-methionine = N(6),N(6),N(6)-trimethyl-L-lysyl(4)-[histone H3] + 3 S-adenosyl-L-homocysteine + 3 H(+). It carries out the reaction L-lysyl-[protein] + S-adenosyl-L-methionine = N(6)-methyl-L-lysyl-[protein] + S-adenosyl-L-homocysteine + H(+). In terms of biological role, protein-lysine N-methyltransferase that methylates both histones and non-histone proteins, including p53/TP53 and RB1. Specifically trimethylates histone H3 'Lys-4' (H3K4me3) in vivo. The activity requires interaction with HSP90alpha. Shows even higher methyltransferase activity on p53/TP53. Monomethylates 'Lys-370' of p53/TP53, leading to decreased DNA-binding activity and subsequent transcriptional regulation activity of p53/TP53. Monomethylates RB1 at 'Lys-860'. This is N-lysine methyltransferase SMYD2-B (smyd2-b) from Xenopus laevis (African clawed frog).